The sequence spans 632 residues: Probable potassium transport system protein Kup (632 aa).

The next 12 membrane-spanning stretches (helical) occupy residues 20 to 40 (LLVAAVGVVYGDIGTSPLYTL), 60 to 80 (ILSLILWSLLWVVSFKYVMFI), 111 to 131 (LMVICGLIGASLFYGDSMITP), 146 to 166 (FDGIDHWVVPISLVVLVALFL), 178 to 198 (LFGPIMVTWFVVLAALGVHGI), 216 to 236 (FFIVHPGMGVAILGAVVLALT), 257 to 277 (WFALVLPALVLNYFGQGAILL), 289 to 309 (LLAPGWALLPLVGLATMATVI), 347 to 367 (IYIAAVNWTLMVGVVLLVIGF), 379 to 399 (VAVTGTMLMTTILVSAVMLLL), 404 to 424 (PVLAVPILIGFLLVDGLFFAA), and 429 to 449 (IVQGGAFPVLAGGVLFLLMST).

It belongs to the HAK/KUP transporter (TC 2.A.72) family.

The protein localises to the cell inner membrane. The enzyme catalyses K(+)(in) + H(+)(in) = K(+)(out) + H(+)(out). Functionally, transport of potassium into the cell. Likely operates as a K(+):H(+) symporter. The polypeptide is Probable potassium transport system protein Kup (Pseudomonas putida (strain W619)).